Reading from the N-terminus, the 317-residue chain is Alkylsulfatase (317 aa).

His78 contributes to the substrate binding site. Fe cation contacts are provided by His105 and Asp107. Val108 contributes to the substrate binding site. Residue Thr132 participates in 2-oxoglutarate binding. Residue His261 coordinates Fe cation. Arg272 and Arg276 together coordinate 2-oxoglutarate.

Belongs to the TfdA dioxygenase family. Homotetramer. The cofactor is Fe(2+).

Its function is as follows. Alpha-ketoglutarate-dependent dioxygenase that in vitro catalyzes the oxygenolytic release of sulfite from hexylsulfate. The protein is Alkylsulfatase of Acinetobacter baylyi (strain ATCC 33305 / BD413 / ADP1).